The sequence spans 505 residues: uncharacterized protein (505 aa).

His-431 functions as the Proton acceptor in the catalytic mechanism.

The protein belongs to the GMC oxidoreductase family. FAD is required as a cofactor.

This is an uncharacterized protein from Sinorhizobium fredii (strain NBRC 101917 / NGR234).